A 1328-amino-acid polypeptide reads, in one-letter code: Myb-binding protein 1A (1328 aa).

Residues 1–22 (MESRDPAQPMSPGEATQSGARP) are disordered. The segment at 1-582 (MESRDPAQPM…WDRMLQTLKE (582 aa)) is interaction with MYB. Residue Ser11 is modified to Phosphoserine. Residues Lys71 and Lys158 each carry the N6-acetyllysine modification. Short sequence motifs (nuclear export signal) lie at residues 240–258 (SDEN…ASSV) and 263–281 (KLPA…EDKF). The segment at 698–753 (SEDENDRVVVTDDSDERRLKGAEDKSEEGEDNRSSESEEESEGEESEEEERDGDVD) is disordered. The span at 703–721 (DRVVVTDDSDERRLKGAED) shows a compositional bias: basic and acidic residues. Acidic residues predominate over residues 734–752 (SEEESEGEESEEEERDGDV). The residue at position 775 (Ser775) is a Phosphoserine. The interval 1146 to 1292 (RPKLEKKDAK…KKGVLGKSPL (147 aa)) is disordered. Basic and acidic residues predominate over residues 1147-1156 (PKLEKKDAKE). Lys1148 participates in a covalent cross-link: Glycyl lysine isopeptide (Lys-Gly) (interchain with G-Cter in SUMO2). Residues 1151–1328 (KKDAKEIPSA…KAQVRKAGKP (178 aa)) are required for nuclear and nucleolar localization. 2 positions are modified to phosphoserine: Ser1159 and Ser1163. The segment covering 1166 to 1184 (SKKRKKKGFLPETKKRKKR) has biased composition (basic residues). Ser1186 is subject to Phosphoserine. Thr1190 and Thr1196 each carry phosphothreonine. At Ser1207 the chain carries Phosphoserine. Basic residues predominate over residues 1209–1218 (GRKKRNRTKA). Ser1232 is modified (phosphoserine). A Phosphothreonine modification is found at Thr1239. Residue Ser1241 is modified to Phosphoserine. At Thr1244 the chain carries Phosphothreonine. Residues Ser1248 and Ser1267 each carry the phosphoserine modification. Thr1269 is modified (phosphothreonine). 2 positions are modified to phosphoserine: Ser1290 and Ser1303. Positions 1306–1328 (IRSPSLLQSGAKKKAQVRKAGKP) are disordered. The residue at position 1307 (Arg1307) is a Citrulline. 3 positions are modified to phosphoserine: Ser1308, Ser1310, and Ser1314. A compositionally biased stretch (basic residues) spans 1316–1328 (AKKKAQVRKAGKP).

The protein belongs to the MYBBP1A family. As to quaternary structure, binds to and represses JUN and MYB via the leucine zipper regions present in these proteins. Also binds to and represses PPARGC1A: this interaction is abrogated when PPARGC1A is phosphorylated by MAPK1/ERK. Binds to and stimulates transcription by AHR. Binds to KPNA2. Interacts with CLOCK and CRY1. Component of the B-WICH complex, at least composed of SMARCA5/SNF2H, BAZ1B/WSTF, SF3B1, DEK, MYO1C, ERCC6, MYBBP1A and DDX21. Post-translationally, citrullinated by PADI4.

It is found in the cytoplasm. The protein localises to the nucleus. It localises to the nucleolus. May activate or repress transcription via interactions with sequence specific DNA-binding proteins. Repression may be mediated at least in part by histone deacetylase activity (HDAC activity). Acts as a corepressor and in concert with CRY1, represses the transcription of the core circadian clock component PER2. Preferentially binds to dimethylated histone H3 'Lys-9' (H3K9me2) on the PER2 promoter. Has a role in rRNA biogenesis together with PWP1. The sequence is that of Myb-binding protein 1A (MYBBP1A) from Homo sapiens (Human).